We begin with the raw amino-acid sequence, 448 residues long: MAAQVIPELQSLNLKTEGGALPQELAPSGAPENEDGDSEDDNGDDQGADESRTIEVLAAKKKKKKKPKKKKKDTQKAQTEPPRVILSALFPNNEYPVGELVEYKDENAYRTTNEEKRYLDRMNNDFLSEYRYAAEVHKQVRQYAQKTIKPGQTLTEIAEGIEDSVRALTGHDGLTEGDNLLGGIAFPTGVNLNNCAAHYSPNAGNKMVLQYEDVMKVDFGVHMNGRIVDSAFTIAFDPVYDNLLAAVKDATNTGIREAGIDVRMSDIGAAIQEAMESYEVEIKGTTYPVKAIRNLNGHTIGQFEIHGGKNGKSVPIVKGGDQSKMEEGEVYAIETFGSTGRGYVRDDMETSHYAKVPDAPNVPLRLSSAKNLLNVITKNFGTLPFCRRYLDRLRQDKYLLGLNNLVANGLVDAYPPLCDIKGSYTAQFEHTILLRPNIKEVISRGDDY.

The interval 1–83 (MAAQVIPELQ…TQKAQTEPPR (83 aa)) is disordered. Residues 32–48 (ENEDGDSEDDNGDDQGA) are compositionally biased toward acidic residues. Residues 59–73 (AKKKKKKKPKKKKKD) show a composition bias toward basic residues. His-198 provides a ligand contact to substrate. Asp-218, Asp-229, and His-298 together coordinate a divalent metal cation. His-306 serves as a coordination point for substrate. 2 residues coordinate a divalent metal cation: Glu-334 and Glu-429.

The protein belongs to the peptidase M24A family. Methionine aminopeptidase eukaryotic type 2 subfamily. It depends on Co(2+) as a cofactor. The cofactor is Zn(2+). Mn(2+) serves as cofactor. Requires Fe(2+) as cofactor.

It localises to the cytoplasm. The catalysed reaction is Release of N-terminal amino acids, preferentially methionine, from peptides and arylamides.. Its function is as follows. Cotranslationally removes the N-terminal methionine from nascent proteins. The N-terminal methionine is often cleaved when the second residue in the primary sequence is small and uncharged (Met-Ala-, Cys, Gly, Pro, Ser, Thr, or Val). This is Methionine aminopeptidase 2-1 from Ajellomyces capsulatus (strain G186AR / H82 / ATCC MYA-2454 / RMSCC 2432) (Darling's disease fungus).